The primary structure comprises 214 residues: Ribosomal RNA small subunit methyltransferase G (214 aa).

S-adenosyl-L-methionine-binding positions include Gly-58, 109 to 110 (AE), and Arg-126.

This sequence belongs to the methyltransferase superfamily. RNA methyltransferase RsmG family.

It is found in the cytoplasm. Functionally, specifically methylates the N7 position of a guanine in 16S rRNA. This is Ribosomal RNA small subunit methyltransferase G from Ureaplasma parvum serovar 3 (strain ATCC 700970).